The following is a 1014-amino-acid chain: Valine--tRNA ligase (1014 aa).

The 'HIGH' region signature appears at 49–59; it reads PNVTGSLHMGH. Positions 542-546 match the 'KMSKS' region motif; it reads KMSKS. Lysine 545 is a binding site for ATP. The stretch at 947–1014 forms a coiled coil; that stretch reads VVDIETLRAK…ILRLRLQTLV (68 aa).

This sequence belongs to the class-I aminoacyl-tRNA synthetase family. ValS type 1 subfamily. Monomer.

Its subcellular location is the cytoplasm. It carries out the reaction tRNA(Val) + L-valine + ATP = L-valyl-tRNA(Val) + AMP + diphosphate. Its function is as follows. Catalyzes the attachment of valine to tRNA(Val). As ValRS can inadvertently accommodate and process structurally similar amino acids such as threonine, to avoid such errors, it has a 'posttransfer' editing activity that hydrolyzes mischarged Thr-tRNA(Val) in a tRNA-dependent manner. The polypeptide is Valine--tRNA ligase (Nostoc sp. (strain PCC 7120 / SAG 25.82 / UTEX 2576)).